Reading from the N-terminus, the 209-residue chain is C-type lectin domain family 6 member A (209 aa).

Residues 1-20 (MMQEQQPQSTEKRGWLSLRL) are Cytoplasmic-facing. A helical; Signal-anchor for type II membrane protein transmembrane segment spans residues 21–41 (WSVAGISIALLSACFIVSCVV). Residues 42-209 (TYHFTYGETG…SICEMNKIYL (168 aa)) lie on the Extracellular side of the membrane. 4 disulfide bridges follow: C66–C78, C79–C90, C107–C202, and C176–C194. The C-type lectin domain maps to 86–203 (FGSSCYFISS…CETRRNSICE (118 aa)). Ca(2+)-binding residues include V116, N118, and E122. N131 carries an N-linked (GlcNAc...) asparagine glycan. Positions 168, 170, and 174 each coordinate Ca(2+). Alpha-D-mannopyranose-binding positions include 168 to 170 (EPN), E174, W182, 190 to 191 (ND), and R198. Residue N170 is glycosylated (N-linked (GlcNAc...) asparagine). Positions 190 and 191 each coordinate Ca(2+). E203 contributes to the Ca(2+) binding site.

As to quaternary structure, associated with FCER1G. Heterodimer with CLEC4D; this heterodimer forms a pattern recognition receptor (PRR) against fungal infection. In terms of tissue distribution, expressed in lung, spleen, lymph node, leukocytes, bone marrow, tonsils and dendritic cells. Strongly expressed in purified monocytes and weakly in B-cells. In peripheral blood cells, preferentially expressed in plasmacytoids rather than myeloids.

The protein localises to the cell membrane. Calcium-dependent lectin that acts as a pattern recognition receptor (PRR) of the innate immune system: specifically recognizes and binds alpha-mannans on C.albicans hypheas. Binding of C.albicans alpha-mannans to this receptor complex leads to phosphorylation of the immunoreceptor tyrosine-based activation motif (ITAM) of FCER1G, triggering activation of SYK, CARD9 and NF-kappa-B, consequently driving maturation of antigen-presenting cells and shaping antigen-specific priming of T-cells toward effector T-helper 1 and T-helper 17 cell subtypes. Recognizes also, in a mannose-dependent manner, allergens from house dust mite and fungi, by promoting cysteinyl leukotriene production. Recognizes soluble elements from the eggs of Shistosoma mansoni altering adaptive immune responses. This Homo sapiens (Human) protein is C-type lectin domain family 6 member A.